We begin with the raw amino-acid sequence, 221 residues long: Iron-sulfur cluster repair protein YtfE (221 aa).

This sequence belongs to the RIC family. YtfE subfamily. In terms of assembly, homodimer.

The protein resides in the cytoplasm. In terms of biological role, di-iron-containing protein involved in the repair of iron-sulfur clusters damaged by oxidative and nitrosative stress conditions. The chain is Iron-sulfur cluster repair protein YtfE from Yersinia pseudotuberculosis serotype IB (strain PB1/+).